A 33-amino-acid polypeptide reads, in one-letter code: Brevinin-2DYc (33 aa).

Cysteines 27 and 33 form a disulfide.

As to expression, expressed by the skin glands.

It is found in the secreted. Functionally, antimicrobial peptide. A mixture of Brevinin-2DYc/2DYd is active against the Gram-positive bacterium S.aureus (MIC=15 uM) and the Gram-negative bacterium E.coli (MIC=15 uM). The sequence is that of Brevinin-2DYc from Rana dybowskii (Dybovsky's frog).